Here is a 150-residue protein sequence, read N- to C-terminus: Large ribosomal subunit protein bL9 (150 aa).

This sequence belongs to the bacterial ribosomal protein bL9 family.

Functionally, binds to the 23S rRNA. In Burkholderia multivorans (strain ATCC 17616 / 249), this protein is Large ribosomal subunit protein bL9.